We begin with the raw amino-acid sequence, 399 residues long: Tyrosine--tRNA ligase 2 (399 aa).

The short motif at Pro-42–His-51 is the 'HIGH' region element. The 'KMSKS' region signature appears at Lys-226–Ser-230. Lys-229 serves as a coordination point for ATP. The 61-residue stretch at Met-336–Leu-396 folds into the S4 RNA-binding domain.

It belongs to the class-I aminoacyl-tRNA synthetase family. TyrS type 2 subfamily. Homodimer.

It localises to the cytoplasm. It carries out the reaction tRNA(Tyr) + L-tyrosine + ATP = L-tyrosyl-tRNA(Tyr) + AMP + diphosphate + H(+). Functionally, catalyzes the attachment of tyrosine to tRNA(Tyr) in a two-step reaction: tyrosine is first activated by ATP to form Tyr-AMP and then transferred to the acceptor end of tRNA(Tyr). This Pseudomonas aeruginosa (strain ATCC 15692 / DSM 22644 / CIP 104116 / JCM 14847 / LMG 12228 / 1C / PRS 101 / PAO1) protein is Tyrosine--tRNA ligase 2.